A 355-amino-acid polypeptide reads, in one-letter code: Uroporphyrinogen decarboxylase (355 aa).

Substrate-binding positions include 38 to 42 (RQAGR), aspartate 87, tyrosine 162, serine 217, and histidine 331.

The protein belongs to the uroporphyrinogen decarboxylase family. Homodimer.

It localises to the cytoplasm. The catalysed reaction is uroporphyrinogen III + 4 H(+) = coproporphyrinogen III + 4 CO2. The protein operates within porphyrin-containing compound metabolism; protoporphyrin-IX biosynthesis; coproporphyrinogen-III from 5-aminolevulinate: step 4/4. Catalyzes the decarboxylation of four acetate groups of uroporphyrinogen-III to yield coproporphyrinogen-III. The sequence is that of Uroporphyrinogen decarboxylase from Streptomyces avermitilis (strain ATCC 31267 / DSM 46492 / JCM 5070 / NBRC 14893 / NCIMB 12804 / NRRL 8165 / MA-4680).